We begin with the raw amino-acid sequence, 53 residues long: Light-harvesting protein B-800/850 alpha chain (53 aa).

Residues 1-14 (MNQGKIWTVVNPSV) are Cytoplasmic-facing. The chain crosses the membrane as a helical span at residues 15–35 (GLPLLLGSVTVIAILVHAAVL). His-31 is an a bacteriochlorophyll binding site. Topologically, residues 36–53 (SHTTWFPAYWQGGLKKAA) are periplasmic.

Belongs to the antenna complex alpha subunit family. As to quaternary structure, the core complex is formed by different alpha and beta chains, binding bacteriochlorophyll molecules, and arranged most probably in tetrameric structures disposed around the reaction center. The non-pigmented gamma chains may constitute additional components.

Its subcellular location is the cell inner membrane. Antenna complexes are light-harvesting systems, which transfer the excitation energy to the reaction centers. In Rhodoblastus acidophilus (Rhodopseudomonas acidophila), this protein is Light-harvesting protein B-800/850 alpha chain.